The following is a 405-amino-acid chain: MTNQTARSSKKERYANLIPMEELHSEKDRLFPFPIYDKLRRESPVRYDPLRDCWDVFKYDDVQFVLKNPKLFSSKRGIQTESILTMDPPKHTKLRALVSRAFTPKAVKQLETRIKDVTAFLLQEARQKSTIDIIEDFAGPLPVIIIAEMLGAPIEDRHLIKTYSDVLVAGAKDSSDKAVADMVHNRRDGHAFLSDYFRDILSKRRAEPKEDLMTMLLQAEIDGEYLTEEQLIGFCILLLVAGNETTTNLIANAVRYLTEDSVVQQQVRQNTDNVANVIEETLRYYSPVQAIGRVATEDTELGGVFIKKGSSVISWIASANRDEDKFCKPDCFKIDRPSYPHLSFGFGIHFCLGAPLARLEANIALSSLLSMSACIEKAAHDEKLEAIPSPFVFGVKRLPVRITFK.

Cys-351 serves as a coordination point for heme.

This sequence belongs to the cytochrome P450 family. Requires heme as cofactor.

Cytochromes P450 are a group of heme-thiolate monooxygenases. They oxidize a variety of structurally unrelated compounds, including steroids, fatty acids, and xenobiotics. The polypeptide is Cytochrome P450 109 (cyp109) (Bacillus spizizenii (strain ATCC 23059 / NRRL B-14472 / W23) (Bacillus subtilis subsp. spizizenii)).